The chain runs to 183 residues: Heavy metal-associated isoprenylated plant protein 44 (183 aa).

Residues 50-113 (LQTVELKVRM…AVRRAGKRAE (64 aa)) enclose the HMA domain. Residues Cys61 and Cys64 each coordinate a metal cation. At Cys180 the chain carries Cysteine methyl ester. Cys180 carries S-farnesyl cysteine lipidation. Residues 181 to 183 (RLM) constitute a propeptide, removed in mature form.

Belongs to the HIPP family.

Functionally, heavy-metal-binding protein. The polypeptide is Heavy metal-associated isoprenylated plant protein 44 (Arabidopsis thaliana (Mouse-ear cress)).